The chain runs to 33 residues: uncharacterized protein (33 aa).

A disordered region spans residues 1 to 33; the sequence is MQPGTGLSFDISQILKQGSDPKQKLPERQAIVL.

This is an uncharacterized protein from Caenorhabditis elegans.